We begin with the raw amino-acid sequence, 313 residues long: DNA-directed RNA polymerase subunit alpha (313 aa).

Residues methionine 1 to tyrosine 227 are alpha N-terminal domain (alpha-NTD). An alpha C-terminal domain (alpha-CTD) region spans residues arginine 242–glutamate 313.

Belongs to the RNA polymerase alpha chain family. As to quaternary structure, homodimer. The RNAP catalytic core consists of 2 alpha, 1 beta, 1 beta' and 1 omega subunit. When a sigma factor is associated with the core the holoenzyme is formed, which can initiate transcription.

The catalysed reaction is RNA(n) + a ribonucleoside 5'-triphosphate = RNA(n+1) + diphosphate. In terms of biological role, DNA-dependent RNA polymerase catalyzes the transcription of DNA into RNA using the four ribonucleoside triphosphates as substrates. The sequence is that of DNA-directed RNA polymerase subunit alpha from Rubrobacter xylanophilus (strain DSM 9941 / JCM 11954 / NBRC 16129 / PRD-1).